We begin with the raw amino-acid sequence, 50 residues long: Thymosin beta-4 (50 aa).

Residues 1–50 (MLLPATMSDKPDMAEIEKFDKSKLKKTETQEKNPLPSKETIEQEKQAGES) form a disordered region. Ser-8 is modified (phosphoserine). Positions 9 to 31 (DKPDMAEIEKFDKSKLKKTETQE) are enriched in basic and acidic residues. At Lys-10 the chain carries N6-acetyllysine. The residue at position 18 (Lys-18) is an N6-acetyllysine; alternate. A Glycyl lysine isopeptide (Lys-Gly) (interchain with G-Cter in SUMO2); alternate cross-link involves residue Lys-18. Thr-29 is subject to Phosphothreonine. At Lys-32 the chain carries N6-acetyllysine. A Phosphoserine modification is found at Ser-37. Lys-38 bears the N6-acetyllysine mark. Basic and acidic residues predominate over residues 39–50 (ETIEQEKQAGES). Residue Thr-40 is modified to Phosphothreonine. An N6-acetyllysine modification is found at Lys-45.

Belongs to the thymosin beta family. In terms of assembly, identified in a complex composed of ACTA1, COBL, GSN AND TMSB4X. Interacts with SERPINB1. AcSDKP is inactivated by ACE, which removes the dipeptide Lys-Pro from its C-terminus. As to expression, originally found in thymus but it is widely distributed in many tissues.

The protein localises to the cytoplasm. Its subcellular location is the cytoskeleton. Its function is as follows. Plays an important role in the organization of the cytoskeleton. Binds to and sequesters actin monomers (G actin) and therefore inhibits actin polymerization. Functionally, potent inhibitor of bone marrow derived stem cell differentiation. Acts by inhibits the entry of hematopoietic pluripotent stem cells into the S-phase. The sequence is that of Thymosin beta-4 (Tmsb4x) from Mus musculus (Mouse).